The following is a 351-amino-acid chain: Lipopolysaccharide core biosynthesis mannosyltransferase LpsB (351 aa).

Belongs to the glycosyltransferase group 1 family. Glycosyltransferase 4 subfamily.

Its pathway is bacterial outer membrane biogenesis; LPS core biosynthesis. Functionally, acts at transfer of mannose group to a 3-deoxy-D-mono octulonic acid (KDO) via an alpha-1,5 linkage. This Rhizobium meliloti (strain 1021) (Ensifer meliloti) protein is Lipopolysaccharide core biosynthesis mannosyltransferase LpsB (lpsB).